Reading from the N-terminus, the 558-residue chain is EF-hand and coiled-coil domain-containing protein 1 (558 aa).

Residues glycine 43 to asparagine 78 form the EF-hand domain. Over residues leucine 161–proline 170 the composition is skewed to basic residues. 2 disordered regions span residues leucine 161–arginine 183 and arginine 304–glycine 395. 2 coiled-coil regions span residues alanine 179–arginine 304 and valine 453–serine 495.

The sequence is that of EF-hand and coiled-coil domain-containing protein 1 (Efcc1) from Mus musculus (Mouse).